A 252-amino-acid chain; its full sequence is ATP synthase subunit a (252 aa).

The next 6 helical transmembrane spans lie at 29–49 (FTNVSFFIIATVVATSVFLFI), 87–107 (FFPLVFSLFTFILVANFIGLF), 116–136 (QIMITFSLAMLVILTVVGYGF), 146–166 (LFVPSGVPVVILPLVTMIEVI), 183–205 (MLAGHITLKVFSGFIVSMIELGI), and 219–239 (VAITALEFLVAFLQAYVFTVL).

This sequence belongs to the ATPase A chain family. As to quaternary structure, F-type ATPases have 2 components, CF(1) - the catalytic core - and CF(0) - the membrane proton channel. CF(1) has five subunits: alpha(3), beta(3), gamma(1), delta(1), epsilon(1). CF(0) has three main subunits: a(1), b(2) and c(9-12). The alpha and beta chains form an alternating ring which encloses part of the gamma chain. CF(1) is attached to CF(0) by a central stalk formed by the gamma and epsilon chains, while a peripheral stalk is formed by the delta and b chains.

Its subcellular location is the cell inner membrane. Key component of the proton channel; it plays a direct role in the translocation of protons across the membrane. This chain is ATP synthase subunit a, found in Bartonella quintana (strain Toulouse) (Rochalimaea quintana).